We begin with the raw amino-acid sequence, 522 residues long: Amphoterin-induced protein 2 (522 aa).

A signal peptide spans 1-39 (MSLRVHTLPTLLGAVVRPGCRELLCLLMITVTVGPGASG). Residues 40–68 (VCPTACICATDIVSCTNKNLSKVPGNLFR) form the LRRNT domain. At 40 to 398 (VCPTACICAT…RSHAHEAFNT (359 aa)) the chain is on the extracellular side. 2 disulfide bridges follow: C41–C47 and C45–C54. N58 carries an N-linked (GlcNAc...) asparagine glycan. 6 LRR repeats span residues 69-90 (LIKR…WIPV), 94-115 (KLNT…SFST), 118-139 (NLKC…VFQE), 142-163 (VLEV…AFGG), 166-187 (QLQK…LYVG), and 193-214 (ELMF…HINL). N104 is a glycosylation site (N-linked (GlcNAc...) asparagine). In terms of domain architecture, LRRCT spans 228–284 (NPFVCDCSLYSLLVFWYRRHFSSVMDFKNDYTCRLWSDSRHSRQVLLLQDSFMNCSD). 2 disulfides stabilise this stretch: C232–C260 and C234–C282. Residues N281, N288, N345, N373, N381, and N384 are each glycosylated (N-linked (GlcNAc...) asparagine). Positions 289–379 (GSFRALGFIH…RLLNETVDVT (91 aa)) constitute an Ig-like C2-type domain. C310 and C363 are oxidised to a cystine. The helical transmembrane segment at 399 to 419 (AFTTLAACVASIVLVLLYLYL) threads the bilayer. Residues 420 to 522 (TPCPCKCKTK…FSDTPFVAST (103 aa)) are Cytoplasmic-facing. Positions 501–522 (RGKSDSDSVNSVFSDTPFVAST) are disordered.

Belongs to the immunoglobulin superfamily. AMIGO family. In terms of assembly, binds itself as well as AMIGO1 and AMIGO3. In terms of tissue distribution, highest levels in breast, ovary, cervix, and uterus. Lower levels in lung, colon, and rectum. Differentially expressed in 56% of thyroid, 57% of pancreatic and 45% of stomach cancers.

The protein localises to the cell membrane. The protein resides in the nucleus. In terms of biological role, required for depolarization-dependent survival of cultured cerebellar granule neurons. May mediate homophilic as well as heterophilic cell-cell interaction with AMIGO1 or AMIGO3. May contribute to signal transduction through its intracellular domain. May be required for tumorigenesis of a subset of gastric adenocarcinomas. The protein is Amphoterin-induced protein 2 of Homo sapiens (Human).